A 209-amino-acid chain; its full sequence is Kunitz trypsin inhibitor 1 (209 aa).

Positions 1-22 (MKATISITTIFLVVALAAPSLA) are cleaved as a signal peptide. 2 disulfides stabilise this stretch: Cys-63–Cys-107 and Cys-154–Cys-162. Asn-156 is a glycosylation site (N-linked (GlcNAc...) asparagine).

Belongs to the protease inhibitor I3 (leguminous Kunitz-type inhibitor) family.

Functionally, exhibits Kunitz trypsin protease inhibitor activity. This is Kunitz trypsin inhibitor 1 from Arabidopsis thaliana (Mouse-ear cress).